The chain runs to 177 residues: Bifunctional protein PyrR (177 aa).

The PRPP-binding motif lies at 97–109; sequence IILVDDVLYTGRT.

This sequence belongs to the purine/pyrimidine phosphoribosyltransferase family. PyrR subfamily.

The catalysed reaction is UMP + diphosphate = 5-phospho-alpha-D-ribose 1-diphosphate + uracil. Regulates the transcription of the pyrimidine nucleotide (pyr) operon in response to exogenous pyrimidines. In terms of biological role, also displays a weak uracil phosphoribosyltransferase activity which is not physiologically significant. The sequence is that of Bifunctional protein PyrR from Nitrosococcus oceani (strain ATCC 19707 / BCRC 17464 / JCM 30415 / NCIMB 11848 / C-107).